We begin with the raw amino-acid sequence, 72 residues long: Omega-conotoxin-like SVIA mutant 1 (72 aa).

The first 22 residues, Met-1–Ala-22, serve as a signal peptide directing secretion. The propeptide occupies Glu-23–Arg-48. 3 disulfide bridges follow: Cys-49–Cys-63, Cys-56–Cys-66, and Cys-62–Cys-71. At Pro-55 the chain carries 4-hydroxyproline.

It belongs to the conotoxin O1 superfamily. In terms of tissue distribution, expressed by the venom duct.

Its subcellular location is the secreted. Its function is as follows. Omega-conotoxins act at presynaptic membranes, they bind and block voltage-gated calcium channels (Cav). The protein is Omega-conotoxin-like SVIA mutant 1 of Conus striatus (Striated cone).